The sequence spans 383 residues: MRLRKTGLLAPVNDIIDLPTPSNISYWWNFGSLLGLCLGIQILTGVLLAMHYRSDVSLAFSSVAHIVRDVNYGWILRYVHANGASLFFICVYCHIGRGLYYGSYSRVLTWIVGVLIYFIMMLTAFIGYVLPWGQMSFWGATVITNLVSAIPSVGGSIVEWIWGGFSVSNCTLNRFFSLHYLLPFVLVGLVLAHLLTLHEKGANNPLGVVSLSDRSTFHVYFTIKDILGFLILLGVFVIIGIEPRIETLLQDPENFIQANPLVTPVHIQPEWYFLFAYAILRSIPNKLGGVLALFASILVLLLMPILDRSKIRSLTFNPVAKFFFWFIVGDFFILTWIGSAPAGTEPYVLIGRIATIFYFGYFLVLVPLLGYLSNLFYEYNGTT.

4 helical membrane-spanning segments follow: residues 30–50, 74–96, 109–129, and 175–195; these read FGSLLGLCLGIQILTGVLLAM, WILRYVHANGASLFFICVYCHIG, TWIVGVLIYFIMMLTAFIGYV, and FFSLHYLLPFVLVGLVLAHLL. Positions 80 and 94 each coordinate heme b. Heme b-binding residues include His-179 and His-193. His-198 is an a ubiquinone binding site. 4 consecutive transmembrane segments (helical) span residues 221-241, 289-309, 320-340, and 345-365; these read FTIKDILGFLILLGVFVIIGI, GVLALFASILVLLLMPILDRS, AKFFFWFIVGDFFILTWIGSA, and EPYVLIGRIATIFYFGYFLVL.

This sequence belongs to the cytochrome b family. As to quaternary structure, the main subunits of complex b-c1 are: cytochrome b, cytochrome c1 and the Rieske protein. Requires heme b as cofactor.

Its subcellular location is the mitochondrion inner membrane. Its function is as follows. Component of the ubiquinol-cytochrome c reductase complex (complex III or cytochrome b-c1 complex) that is part of the mitochondrial respiratory chain. The b-c1 complex mediates electron transfer from ubiquinol to cytochrome c. Contributes to the generation of a proton gradient across the mitochondrial membrane that is then used for ATP synthesis. The chain is Cytochrome b (mt:Cyt-b) from Trichoplax adhaerens (Trichoplax reptans).